Reading from the N-terminus, the 223-residue chain is Adenylate kinase (223 aa).

10–15 (GSGKGT) provides a ligand contact to ATP. The interval 30 to 59 (ESGAIFRKHIGGGTELGMKAKEYIDKGELV) is NMP. AMP-binding positions include Ser31, Arg36, 57-59 (ELV), 84-87 (GFPR), and Gln91. Residues 125–164 (GRRLCENDPNHPNNKFIDAIKPDGDKCRVCGGALSERADD) are LID. Residue Arg126 participates in ATP binding. AMP contacts are provided by Arg161 and Arg173. Gly209 is an ATP binding site.

Belongs to the adenylate kinase family. As to quaternary structure, monomer.

The protein localises to the cytoplasm. It catalyses the reaction AMP + ATP = 2 ADP. It functions in the pathway purine metabolism; AMP biosynthesis via salvage pathway; AMP from ADP: step 1/1. Catalyzes the reversible transfer of the terminal phosphate group between ATP and AMP. Plays an important role in cellular energy homeostasis and in adenine nucleotide metabolism. The polypeptide is Adenylate kinase (Maridesulfovibrio salexigens (strain ATCC 14822 / DSM 2638 / NCIMB 8403 / VKM B-1763) (Desulfovibrio salexigens)).